Consider the following 209-residue polypeptide: Pyrrolidone-carboxylate peptidase (209 aa).

Residues Glu79, Cys142, and His164 contribute to the active site.

Belongs to the peptidase C15 family. In terms of assembly, homotetramer.

It localises to the cytoplasm. It carries out the reaction Release of an N-terminal pyroglutamyl group from a polypeptide, the second amino acid generally not being Pro.. In terms of biological role, removes 5-oxoproline from various penultimate amino acid residues except L-proline. This chain is Pyrrolidone-carboxylate peptidase, found in Saccharolobus islandicus (strain Y.N.15.51 / Yellowstone #2) (Sulfolobus islandicus).